A 144-amino-acid polypeptide reads, in one-letter code: UPF0735 ACT domain-containing protein LSEI_1046 (144 aa).

The ACT domain maps to 68 to 143; it reads VISLMLHHDR…GVSDVHLVSV (76 aa).

Belongs to the UPF0735 family.

This is UPF0735 ACT domain-containing protein LSEI_1046 from Lacticaseibacillus paracasei (strain ATCC 334 / BCRC 17002 / CCUG 31169 / CIP 107868 / KCTC 3260 / NRRL B-441) (Lactobacillus paracasei).